Here is a 421-residue protein sequence, read N- to C-terminus: Caspase-12 (421 aa).

The 92-residue stretch at 1 to 92 folds into the CARD domain; it reads MADKKPSKED…QLSLEYQHES (92 aa). Residue S85 is modified to Phosphoserine. The disordered stretch occupies residues 88–131; the sequence is YQHESEDQESEESSASSSSSTESEEENEESKDEERAASAHSMAV. Over residues 109–118 the composition is skewed to acidic residues; the sequence is ESEEENEESK. Catalysis depends on residues H252 and C300.

The protein belongs to the peptidase C14A family. Heterotetramer that consists of two anti-parallel arranged heterodimers, each one formed by two subunits (Potential). May interact with TRAF2.

Its function is as follows. Involved in the activation cascade of caspases responsible for apoptosis execution. This Macaca mulatta (Rhesus macaque) protein is Caspase-12.